Reading from the N-terminus, the 90-residue chain is UPF0184 protein (90 aa).

The stretch at Asp16–Glu78 forms a coiled coil. The tract at residues Ser57–Gln90 is disordered. Residues Thr81–Gln90 are compositionally biased toward basic and acidic residues.

It belongs to the UPF0184 (EST00098) family.

This Branchiostoma floridae (Florida lancelet) protein is UPF0184 protein.